A 312-amino-acid chain; its full sequence is Very-long-chain 3-oxoacyl-CoA reductase (312 aa).

Residues 4–24 (APPAAGFLYWVGASTIAYLAL) traverse the membrane as a helical segment. 50–79 (GEWAVVTGGTDGIGKAYAEELAKRGMKIVL) contacts NADP(+). A run of 2 helical transmembrane segments spans residues 182-202 (GVILNISSASGMLPVPLLTIY) and 269-285 (TTGYVIHSLMGSINSIM). S189 is a binding site for substrate. Y202 (proton acceptor) is an active-site residue. The Di-lysine motif motif lies at 308–312 (KRKKN).

This sequence belongs to the short-chain dehydrogenases/reductases (SDR) family. 17-beta-HSD 3 subfamily. As to expression, expressed in most tissues tested.

It is found in the endoplasmic reticulum membrane. It catalyses the reaction a very-long-chain (3R)-3-hydroxyacyl-CoA + NADP(+) = a very-long-chain 3-oxoacyl-CoA + NADPH + H(+). The enzyme catalyses 17beta-estradiol + NAD(+) = estrone + NADH + H(+). It carries out the reaction 17beta-estradiol + NADP(+) = estrone + NADPH + H(+). The catalysed reaction is 3-oxooctadecanoyl-CoA + NADPH + H(+) = (3R)-hydroxyoctadecanoyl-CoA + NADP(+). It catalyses the reaction (7Z,10Z,13Z,16Z)-3-oxodocosatetraenoyl-CoA + NADPH + H(+) = (3R)-hydroxy-(7Z,10Z,13Z,16Z)-docosatetraenoyl-CoA + NADP(+). The enzyme catalyses 3-oxo-(7Z,10Z,13Z,16Z,19Z)-docosapentaenoyl-CoA + NADPH + H(+) = (3R)-hydroxy-(7Z,10Z,13Z,16Z,19Z)-docosapentaenoyl-CoA + NADP(+). It carries out the reaction (8Z,11Z,14Z)-3-oxoeicosatrienoyl-CoA + NADPH + H(+) = (3R)-hydroxy-(8Z,11Z,14Z)-eicosatrienoyl-CoA + NADP(+). It participates in lipid metabolism; fatty acid biosynthesis. Its pathway is steroid biosynthesis; estrogen biosynthesis. Functionally, catalyzes the second of the four reactions of the long-chain fatty acids elongation cycle. This endoplasmic reticulum-bound enzymatic process, allows the addition of two carbons to the chain of long- and very long-chain fatty acids/VLCFAs per cycle. This enzyme has a 3-ketoacyl-CoA reductase activity, reducing 3-ketoacyl-CoA to 3-hydroxyacyl-CoA, within each cycle of fatty acid elongation. Thereby, it may participate in the production of VLCFAs of different chain lengths that are involved in multiple biological processes as precursors of membrane lipids and lipid mediators. May also catalyze the transformation of estrone (E1) into estradiol (E2) and play a role in estrogen formation. This Mus musculus (Mouse) protein is Very-long-chain 3-oxoacyl-CoA reductase.